Reading from the N-terminus, the 197-residue chain is Putative WUSCHEL-related homeobox 10 (197 aa).

The segment at residues 75–139 (STRPRWTPTT…NRRARSKRKQ (65 aa)) is a DNA-binding region (homeobox; WUS-type). Residues 132–168 (RARSKRKQPPTTTITSSQADDAAVTTTEERGRCGDDS) form a disordered region. The segment covering 140–150 (PPTTTITSSQA) has biased composition (polar residues).

The protein belongs to the WUS homeobox family.

The protein localises to the nucleus. Potential transcription factor that plays a central role during developmental processes. The sequence is that of Putative WUSCHEL-related homeobox 10 (WOX10) from Arabidopsis thaliana (Mouse-ear cress).